The primary structure comprises 428 residues: Lipoamide acyltransferase component of branched-chain alpha-keto acid dehydrogenase complex (428 aa).

Residues 3-78 enclose the Lipoyl-binding domain; it reads THVIKMPDIG…AVGGELIRLE (76 aa). At K44 the chain carries N6-lipoyllysine. The interval 88-145 is disordered; the sequence is SPAAATPAAPVAATPEKPKEAPVAAPKAAAEAPRALRDSEAPRQRRQPGERPLASPAV. Residues 89–120 are compositionally biased toward low complexity; that stretch reads PAAATPAAPVAATPEKPKEAPVAAPKAAAEAP. A compositionally biased stretch (basic and acidic residues) spans 121 to 136; it reads RALRDSEAPRQRRQPG. Residues 140-177 enclose the Peripheral subunit-binding (PSBD) domain; the sequence is LASPAVRQRARDLGIELQFVQGSGPAGRVLHEDLDAYL. Residues H400 and D404 contribute to the active site.

This sequence belongs to the 2-oxoacid dehydrogenase family. As to quaternary structure, forms a 24-polypeptide structural core with octahedral symmetry. It depends on (R)-lipoate as a cofactor.

The enzyme catalyses N(6)-[(R)-dihydrolipoyl]-L-lysyl-[protein] + 2-methylpropanoyl-CoA = N(6)-[(R)-S(8)-2-methylpropanoyldihydrolipoyl]-L-lysyl-[protein] + CoA. The branched-chain alpha-keto dehydrogenase complex catalyzes the overall conversion of alpha-keto acids to acyl-CoA and CO(2). It contains multiple copies of three enzymatic components: branched-chain alpha-keto acid decarboxylase (E1), lipoamide acyltransferase (E2) and lipoamide dehydrogenase (E3). This Pseudomonas aeruginosa (strain ATCC 15692 / DSM 22644 / CIP 104116 / JCM 14847 / LMG 12228 / 1C / PRS 101 / PAO1) protein is Lipoamide acyltransferase component of branched-chain alpha-keto acid dehydrogenase complex (bkdB).